Reading from the N-terminus, the 338-residue chain is Protein FosB (338 aa).

2 disordered regions span residues 1–54 and 80–179; these read MFQA…PGSF and AQSQ…RREL. Polar residues-rich tracts occupy residues 13 to 31 and 102 to 112; these read SRCS…SVDS and TSYSTPGLSAY. Serine 27 carries the phosphoserine modification. The segment covering 123–137 has biased composition (low complexity); that stretch reads PSTSTTTSGPVSARP. The region spanning 155-218 is the bZIP domain; sequence EEKRRVRRER…ERLEFVLVAH (64 aa). A basic motif region spans residues 157–182; it reads KRRVRRERNKLAAAKCRNRRRELTDR. Residues 183 to 211 are leucine-zipper; sequence LQAETDQLEEEKAELESEIAELQKEKERL. 2 disordered regions span residues 222–276 and 316–338; these read CKIP…PPNL and GAQR…LLAL. Positions 256–265 are enriched in pro residues; the sequence is LPPPPPPPLP. 2 stretches are compositionally biased toward polar residues: residues 266–276 and 318–338; these read FQSSRDAPPNL and QRTS…LLAL.

This sequence belongs to the bZIP family. Fos subfamily. In terms of assembly, heterodimer; binds to DNA as heterodimer. Component of an AP-1 transcription factor complex; composed of FOS-JUN heterodimers. As part of the AP-1 transcription factor complex, forms heterodimers with JUN, JUNB or JUND, thereby binding to the AP-1 consensus sequence and stimulating transcription. Interacts with the BAF multiprotein chromatin-remodeling complex subunits SMARCB1 and SMARCD1. Interacts with ARID1A and JUN. As to quaternary structure, homodimer under oxidizing conditions and monomer under reducing conditions (in vitro). Heterodimer; binds to DNA as heterodimer. Forms heterodimers with JUNB, JUN or JUND; thereby binding to the AP-1 consensus sequence but does not stimulate transcription. Forms heterodimers with JUND under oxidizing conditions. Phosphorylated. In terms of processing, phosphorylated at Ser-27 by CSNK2A1; phosphorylation increases protein stability and transactivation potential. In terms of tissue distribution, expressed in brain, including the preoptic area of the hypothalamus, the main and accessory olfactory bulbs, the pyriform cortex and the hippocampus (at protein level). Expressed in the neurons of the subgranular zone of the dentate gyrus in the hippocampus (at protein level). Expressed in pyramidal cells in CA1 and CA3, in the dentate gyrus and the nucleus accumbens of the striatum (at protein level). As to expression, expressed in the core and shell of the nucleus accumbens of the striatum (at protein level). Expressed in the neurons of the subgranular zone of the dentate gyrus in the hippocampus (at protein level).

It localises to the nucleus. Functionally, heterodimerizes with proteins of the JUN family to form an AP-1 transcription factor complex, thereby enhancing their DNA binding activity to gene promoters containing an AP-1 consensus sequence 5'-TGA[GC]TCA-3' and enhancing their transcriptional activity. As part of the AP-1 complex, facilitates enhancer selection together with cell-type-specific transcription factors by collaboratively binding to nucleosomal enhancers and recruiting the SWI/SNF (BAF) chromatin remodeling complex to establish accessible chromatin. Together with JUN, plays a role in activation-induced cell death of T cells by binding to the AP-1 promoter site of FASLG/CD95L, and inducing its transcription in response to activation of the TCR/CD3 signaling pathway. Exhibits transactivation activity in vitro. Involved in the display of nurturing behavior towards newborns. May play a role in neurogenesis in the hippocampus and in learning and memory-related tasks by regulating the expression of various genes involved in neurogenesis, depression and epilepsy. Implicated in behavioral responses related to morphine reward and spatial memory. Exhibits lower transactivation activity than isoform 1 in vitro. The heterodimer with JUN does not display any transcriptional activity, and may thereby act as an transcriptional inhibitor. May be involved in the regulation of neurogenesis in the hippocampus. May play a role in synaptic modifications in nucleus accumbens medium spiny neurons and thereby play a role in adaptive and pathological reward-dependent learning, including maladaptive responses involved in drug addiction. Seems to be more stably expressed with a half-life of ~9.5 hours in cell culture as compared to 1.5 hours half-life of isoform 1. The sequence is that of Protein FosB from Mus musculus (Mouse).